The sequence spans 352 residues: MSQNQASSPADAKPATAISRIAALIPGILLCIAVAGVSALLERAELGVFEHPYVEALVMAILLGMALRSFWKPAPRWQAGIAFSAKQLLEVAVMLLGASISFAAIAASGIALLASIAAVVVIALCVSFGLSRLLGLSTRLSILIACGNSICGNSAIAAVAPIIGANNDEIASSISFTAILGVMMVLGLPLLIPLLQLSATQYGILAGLTVYAVPQVLAATVPAGLVSTQIGTLVKLMRVLMLGPVVVGLSLVASRWQSDAKKTNVGFFRLVPWFILGFLALATLRSLEIVPSTVVGPVTKITSFLTVVSMAALGLGVDVRVLANVGGRVTAAVTLSLMLLLGISIALVHWFK.

Helical transmembrane passes span 21–43 (IAAL…LLER), 53–71 (YVEA…RSFW), 88–110 (LLEV…ASGI), 114–136 (ASIA…LLGL), 143–165 (LIAC…IIGA), 175–197 (SFTA…LLQL), 204–226 (ILAG…AGLV), 236–253 (LMRV…SLVA), 265–284 (VGFF…LATL), 294–316 (VVGP…LGLG), and 329–351 (VTAA…VHWF).

The protein belongs to the UPF0324 family.

The protein resides in the cell membrane. In Bradyrhizobium diazoefficiens (strain JCM 10833 / BCRC 13528 / IAM 13628 / NBRC 14792 / USDA 110), this protein is UPF0324 membrane protein blr3189.